Reading from the N-terminus, the 75-residue chain is Exodeoxyribonuclease 7 small subunit (75 aa).

This sequence belongs to the XseB family. Heterooligomer composed of large and small subunits.

Its subcellular location is the cytoplasm. It carries out the reaction Exonucleolytic cleavage in either 5'- to 3'- or 3'- to 5'-direction to yield nucleoside 5'-phosphates.. Bidirectionally degrades single-stranded DNA into large acid-insoluble oligonucleotides, which are then degraded further into small acid-soluble oligonucleotides. This chain is Exodeoxyribonuclease 7 small subunit, found in Citrifermentans bemidjiense (strain ATCC BAA-1014 / DSM 16622 / JCM 12645 / Bem) (Geobacter bemidjiensis).